Reading from the N-terminus, the 231-residue chain is Probable cell wall protein ARB_06477 (231 aa).

A signal peptide spans 1-17 (MRSVLYLLFTAVAAVAA). The disordered stretch occupies residues 107–206 (TPSFMVDGAT…TGMPTSSGAP (100 aa)). Over residues 121 to 204 (TGPTTSRTSM…SSTGMPTSSG (84 aa)) the composition is skewed to low complexity. S203 carries GPI-anchor amidated serine lipidation. Positions 204–231 (GAPDPNGAVSLALPGGLLSIVLSLMALL) are cleaved as a propeptide — removed in mature form.

It belongs to the SRP1/TIP1 family. Post-translationally, the GPI-anchor is attached to the protein in the endoplasmic reticulum and serves to target the protein to the cell surface. There, the glucosamine-inositol phospholipid moiety is cleaved off and the GPI-modified mannoprotein is covalently attached via its lipidless GPI glycan remnant to the 1,6-beta-glucan of the outer cell wall layer.

The protein resides in the cell membrane. Its subcellular location is the secreted. It is found in the cell wall. In terms of biological role, probable component of the cell wall. This Arthroderma benhamiae (strain ATCC MYA-4681 / CBS 112371) (Trichophyton mentagrophytes) protein is Probable cell wall protein ARB_06477.